The chain runs to 366 residues: tRNA/tmRNA (uracil-C(5))-methyltransferase (366 aa).

Residues Q190, Y218, N223, E239, and D299 each contribute to the S-adenosyl-L-methionine site. C324 serves as the catalytic Nucleophile. Residue E358 is the Proton acceptor of the active site.

The protein belongs to the class I-like SAM-binding methyltransferase superfamily. RNA M5U methyltransferase family. TrmA subfamily.

The catalysed reaction is uridine(54) in tRNA + S-adenosyl-L-methionine = 5-methyluridine(54) in tRNA + S-adenosyl-L-homocysteine + H(+). It carries out the reaction uridine(341) in tmRNA + S-adenosyl-L-methionine = 5-methyluridine(341) in tmRNA + S-adenosyl-L-homocysteine + H(+). Its function is as follows. Dual-specificity methyltransferase that catalyzes the formation of 5-methyluridine at position 54 (m5U54) in all tRNAs, and that of position 341 (m5U341) in tmRNA (transfer-mRNA). The sequence is that of tRNA/tmRNA (uracil-C(5))-methyltransferase from Shigella flexneri serotype 5b (strain 8401).